A 298-amino-acid chain; its full sequence is 4-hydroxy-tetrahydrodipicolinate synthase (298 aa).

T48 contributes to the pyruvate binding site. Y137 serves as the catalytic Proton donor/acceptor. K166 acts as the Schiff-base intermediate with substrate in catalysis. I207 is a binding site for pyruvate.

Belongs to the DapA family. In terms of assembly, homotetramer; dimer of dimers.

The protein localises to the cytoplasm. It catalyses the reaction L-aspartate 4-semialdehyde + pyruvate = (2S,4S)-4-hydroxy-2,3,4,5-tetrahydrodipicolinate + H2O + H(+). It functions in the pathway amino-acid biosynthesis; L-lysine biosynthesis via DAP pathway; (S)-tetrahydrodipicolinate from L-aspartate: step 3/4. Its function is as follows. Catalyzes the condensation of (S)-aspartate-beta-semialdehyde [(S)-ASA] and pyruvate to 4-hydroxy-tetrahydrodipicolinate (HTPA). The chain is 4-hydroxy-tetrahydrodipicolinate synthase from Campylobacter jejuni subsp. jejuni serotype O:23/36 (strain 81-176).